The sequence spans 150 residues: UPF0178 protein Sbal_1771 (150 aa).

This sequence belongs to the UPF0178 family.

The chain is UPF0178 protein Sbal_1771 from Shewanella baltica (strain OS155 / ATCC BAA-1091).